The sequence spans 90 residues: U7-theraphotoxin-Hhn1c (90 aa).

Positions 1–19 (MKTAIFTVVLALAVFAVLS) are cleaved as a signal peptide. The propeptide occupies 20-50 (FGWEANEKALSEEFTELIHEKEAASETEARE). Disulfide bonds link C51–C65, C58–C70, and C64–C81.

The protein belongs to the neurotoxin 10 (Hwtx-1) family. 13 (Hntx-13) subfamily. As to expression, expressed by the venom gland.

The protein resides in the secreted. In terms of biological role, ion channel inhibitor. The protein is U7-theraphotoxin-Hhn1c of Cyriopagopus hainanus (Chinese bird spider).